Consider the following 192-residue polypeptide: Interferon (192 aa).

The N-terminal stretch at 1 to 30 (MAVPASPQHPRGYGILLLTLLMKALAAAAA) is a signal peptide. Intrachain disulfides connect cysteine 31-cysteine 128, cysteine 60-cysteine 154, and cysteine 67-cysteine 167. 2 N-linked (GlcNAc...) asparagine glycosylation sites follow: asparagine 70 and asparagine 77.

Belongs to the alpha/beta interferon family.

It localises to the secreted. Functionally, has antiviral activities. This Meleagris gallopavo (Wild turkey) protein is Interferon.